A 143-amino-acid chain; its full sequence is uncharacterized protein (143 aa).

2 helical membrane passes run 16–36 (LIFA…IFVW) and 48–68 (ICYI…FIYV). Residue asparagine 71 is glycosylated (N-linked (GlcNAc...) asparagine; by host).

It localises to the membrane. This is an uncharacterized protein from Acanthamoeba polyphaga (Amoeba).